Reading from the N-terminus, the 492-residue chain is N-succinylglutamate 5-semialdehyde dehydrogenase (492 aa).

220-225 (GRANTG) lines the NAD(+) pocket. Catalysis depends on residues E243 and C277.

The protein belongs to the aldehyde dehydrogenase family. AstD subfamily.

The enzyme catalyses N-succinyl-L-glutamate 5-semialdehyde + NAD(+) + H2O = N-succinyl-L-glutamate + NADH + 2 H(+). It participates in amino-acid degradation; L-arginine degradation via AST pathway; L-glutamate and succinate from L-arginine: step 4/5. Its function is as follows. Catalyzes the NAD-dependent reduction of succinylglutamate semialdehyde into succinylglutamate. The sequence is that of N-succinylglutamate 5-semialdehyde dehydrogenase from Shigella boydii serotype 4 (strain Sb227).